Consider the following 345-residue polypeptide: Fructose-1,6-bisphosphatase class 1 1 (345 aa).

Glu-90, Asp-109, Leu-111, and Asp-112 together coordinate Mg(2+). Residues 112-115 and Asn-200 each bind substrate; that span reads DGSS. Glu-272 contributes to the Mg(2+) binding site.

It belongs to the FBPase class 1 family. As to quaternary structure, homotetramer. The cofactor is Mg(2+).

The protein resides in the cytoplasm. The enzyme catalyses beta-D-fructose 1,6-bisphosphate + H2O = beta-D-fructose 6-phosphate + phosphate. It functions in the pathway carbohydrate biosynthesis; gluconeogenesis. The protein is Fructose-1,6-bisphosphatase class 1 1 of Nitrobacter hamburgensis (strain DSM 10229 / NCIMB 13809 / X14).